We begin with the raw amino-acid sequence, 408 residues long: LL-diaminopimelate aminotransferase (408 aa).

Positions 15 and 42 each coordinate substrate. Pyridoxal 5'-phosphate-binding positions include Tyr-72, 108-109, Tyr-132, Asn-187, Tyr-218, and 246-248; these read SK and SFS. Substrate is bound by residues Lys-109, Tyr-132, and Asn-187. Lys-249 carries the N6-(pyridoxal phosphate)lysine modification. Pyridoxal 5'-phosphate is bound by residues Arg-257 and Asn-292. Asn-292 and Arg-388 together coordinate substrate.

The protein belongs to the class-I pyridoxal-phosphate-dependent aminotransferase family. LL-diaminopimelate aminotransferase subfamily. In terms of assembly, homodimer. The cofactor is pyridoxal 5'-phosphate.

The enzyme catalyses (2S,6S)-2,6-diaminopimelate + 2-oxoglutarate = (S)-2,3,4,5-tetrahydrodipicolinate + L-glutamate + H2O + H(+). Its pathway is amino-acid biosynthesis; L-lysine biosynthesis via DAP pathway; LL-2,6-diaminopimelate from (S)-tetrahydrodipicolinate (aminotransferase route): step 1/1. In terms of biological role, involved in the synthesis of meso-diaminopimelate (m-DAP or DL-DAP), required for both lysine and peptidoglycan biosynthesis. Catalyzes the direct conversion of tetrahydrodipicolinate to LL-diaminopimelate. In Leptospira interrogans serogroup Icterohaemorrhagiae serovar Lai (strain 56601), this protein is LL-diaminopimelate aminotransferase.